Here is a 343-residue protein sequence, read N- to C-terminus: MEWVEIDGSYGEGGGQILRTSVALSVITGKPVRIYNIRANRPNPGLRPQHLHGILALKELSNAKIKGASVGSTELEFIPGKAEPKHVRVPIKTAGSITLVLQALLPAMAFIGGSFEITGGTDVPWSPPVDYLKHVTLYALEKMGIKVELEIKRRGHYPRGGGLVVGRIEPWEEKKPLKALKWERIEWFAGISHATNLPAHVAERQAKAARERLSEVYSAPVEIETEVSRSLGPGSGIVVWAETDKLRLGGDALGKRGKPAEVVGREAADELIEALKTGMAADRFLGDQLIPFLAFAGGEVGVSEITNHLVTNVWVVEKFFGNVFEVEGEVGKPGTLRVVKSVL.

ATP is bound by residues glutamine 102 and 284-288; that span reads FLGDQ. Catalysis depends on histidine 308, which acts as the Tele-AMP-histidine intermediate.

It belongs to the RNA 3'-terminal cyclase family. Type 1 subfamily.

The protein resides in the cytoplasm. It catalyses the reaction a 3'-end 3'-phospho-ribonucleotide-RNA + ATP = a 3'-end 2',3'-cyclophospho-ribonucleotide-RNA + AMP + diphosphate. Its function is as follows. Catalyzes the conversion of 3'-phosphate to a 2',3'-cyclic phosphodiester at the end of RNA. The mechanism of action of the enzyme occurs in 3 steps: (A) adenylation of the enzyme by ATP; (B) transfer of adenylate to an RNA-N3'P to produce RNA-N3'PP5'A; (C) and attack of the adjacent 2'-hydroxyl on the 3'-phosphorus in the diester linkage to produce the cyclic end product. The biological role of this enzyme is unknown but it is likely to function in some aspects of cellular RNA processing. In Thermococcus kodakarensis (strain ATCC BAA-918 / JCM 12380 / KOD1) (Pyrococcus kodakaraensis (strain KOD1)), this protein is RNA 3'-terminal phosphate cyclase (rtcA).